Consider the following 1147-residue polypeptide: ATP-dependent helicase/deoxyribonuclease subunit B (1147 aa).

8–15 (GGSGAGKS) contacts ATP. Residues Cys-780, Cys-1092, Cys-1095, and Cys-1101 each coordinate [4Fe-4S] cluster.

The protein belongs to the helicase family. AddB/RexB type 1 subfamily. Heterodimer of AddA and AddB. Requires Mg(2+) as cofactor. [4Fe-4S] cluster is required as a cofactor.

In terms of biological role, the heterodimer acts as both an ATP-dependent DNA helicase and an ATP-dependent, dual-direction single-stranded exonuclease. Recognizes the chi site generating a DNA molecule suitable for the initiation of homologous recombination. The AddB subunit has 5' -&gt; 3' nuclease activity but not helicase activity. The polypeptide is ATP-dependent helicase/deoxyribonuclease subunit B (Lachnoclostridium phytofermentans (strain ATCC 700394 / DSM 18823 / ISDg) (Clostridium phytofermentans)).